We begin with the raw amino-acid sequence, 120 residues long: Large ribosomal subunit protein bL19 (120 aa).

Belongs to the bacterial ribosomal protein bL19 family.

Functionally, this protein is located at the 30S-50S ribosomal subunit interface and may play a role in the structure and function of the aminoacyl-tRNA binding site. In Cyanothece sp. (strain PCC 7425 / ATCC 29141), this protein is Large ribosomal subunit protein bL19.